The chain runs to 153 residues: UPF0178 protein MXAN_5526 (153 aa).

The protein belongs to the UPF0178 family.

The chain is UPF0178 protein MXAN_5526 from Myxococcus xanthus (strain DK1622).